Reading from the N-terminus, the 189-residue chain is Protein sisterless A (189 aa).

A disordered region spans residues 93–124 (DCRGSGSGSGSGSGSDVKDAQRQRAESCRKSR). A compositionally biased stretch (basic and acidic residues) spans 108-121 (DVKDAQRQRAESCR).

Homodimer. Interacts with dpn (via bHLH motif). Interacts with da (via bHLH motif). Interacts with Bap60. Localizes to all the embryonic nuclei until nuclear cycle 9, when expression ceases in the prepole cell nuclei. Associates with the somatic nuclei through cycle 10. By nuclear cycle 12, distributes uniformly in the somatic portion of the embryo and no longer associates with the nuclei. After early cycle 14 (beginning of cellularization) there is very little or no expression in the periphery of the embryo or in either the somatic or germ cells. In the yolk, accumulates at the nuclei from nuclear cycle 8 until 10-11 hours after fertilization.

The protein localises to the nucleus. Involved in sex determination and dosage compensation. Required for proper expression of Sxl in embryonic somatic cells. Also has an essential function in the yolk nuclei. Involved in endoderm migration and midgut formation. The polypeptide is Protein sisterless A (sisA) (Drosophila melanogaster (Fruit fly)).